We begin with the raw amino-acid sequence, 393 residues long: Potassium channel subfamily K member 4 (393 aa).

The Cytoplasmic segment spans residues 1-3 (MRS). The helical transmembrane segment at 4–24 (TTLLALLALVLLYLVSGALVF) threads the bilayer. At 25 to 87 (RALEQPHEQQ…NSTSNSSHSA (63 aa)) the chain is on the extracellular side. N-linked (GlcNAc...) asparagine glycans are attached at residues Asn78 and Asn82. The helical intramembrane region spans 88–102 (WDLGSAFFFSGTIIT). 4 residues coordinate K(+): Thr103, Ile104, Gly105, and Tyr106. Residues 103-108 (TIGYGN) form a selectivity filter 1 region. The stretch at 103 to 109 (TIGYGNV) is an intramembrane region. Topologically, residues 110-117 (ALRTDAGR) are extracellular. A helical transmembrane segment spans residues 118–150 (LFCIFYALVGIPLFGILLAGVGDRLGSSLRHGI). Topologically, residues 151–172 (GHIEAIFLKWHVPPELVRVLSA) are cytoplasmic. The chain crosses the membrane as a helical span at residues 173 to 194 (MLFLLIGCLLFVLTPTFVFCYM). Residues 195–199 (EDWSK) are Extracellular-facing. Residues 200–213 (LEAIYFVIVTLTTV) constitute an intramembrane region (helical). K(+) is bound by residues Thr212, Val213, Gly214, and Phe215. The interval 212-217 (TVGFGD) is selectivity filter 2. An intramembrane segment occupies 214–219 (GFGDYV). Over 220 to 233 (AGADPRQDSPAYQP) the chain is Extracellular. Residues 234–260 (LVWFWILLGLAYFASVLTTIGNWLRVV) form a helical membrane-spanning segment. Residues 261–393 (SRRTRAEMGG…GRPRDKGVPV (133 aa)) are Cytoplasmic-facing. Residues 285–393 (RVTQRAGPAA…GRPRDKGVPV (109 aa)) are disordered. The segment covering 319-332 (SPSPPEKAQPPSPP) has biased composition (pro residues). Residues 365–384 (PRGRRRPNPPRKPVRPRGPG) show a composition bias toward basic residues.

It belongs to the two pore domain potassium channel (TC 1.A.1.8) family. Homodimer; disulfide-linked. Forms heterodimers with other 2-pore domain K(+) channel subunits, such as KCNK2 and KCNK10. In terms of processing, N-glycosylated.

The protein resides in the cell membrane. It is found in the cell projection. Its subcellular location is the axon. The enzyme catalyses K(+)(in) = K(+)(out). It catalyses the reaction Rb(+)(in) = Rb(+)(out). The catalysed reaction is Cs(+)(in) = Cs(+)(out). With respect to regulation, activated by mechanical stretch and arachidonic acid. In terms of biological role, k(+) channel that conducts voltage-dependent outward rectifying currents upon membrane depolarization. Voltage sensing is coupled to K(+) electrochemical gradient in an 'ion flux gating' mode where outward but not inward ion flow opens the gate. Converts to voltage-independent 'leak' conductance mode upon stimulation by various stimuli including mechanical membrane stretch, basic pH, heat and lipids. Homo- and heterodimerizes to form functional channels with distinct regulatory and gating properties. At trigeminal A-beta afferent nerves, the heterodimer of KCNK2/TREK-1 and KCNK4/TRAAK is mostly coexpressed at nodes of Ranvier where it conducts voltage-independent mechanosensitive and thermosensitive currents, allowing rapid action potential repolarization, high speed and high frequence saltatory conduction on myelinated nerves to ensure prompt sensory responses. Permeable to other monovalent cations such as Rb(+) and Cs(+). This is Potassium channel subfamily K member 4 from Homo sapiens (Human).